The following is a 164-amino-acid chain: Large ribosomal subunit protein uL11 (164 aa).

It belongs to the universal ribosomal protein uL11 family. As to quaternary structure, part of the ribosomal stalk of the 50S ribosomal subunit. Interacts with L10 and the large rRNA to form the base of the stalk. L10 forms an elongated spine to which L12 dimers bind in a sequential fashion forming a multimeric L10(L12)X complex.

Its function is as follows. Forms part of the ribosomal stalk which helps the ribosome interact with GTP-bound translation factors. This Pyrococcus furiosus (strain ATCC 43587 / DSM 3638 / JCM 8422 / Vc1) protein is Large ribosomal subunit protein uL11.